Reading from the N-terminus, the 445-residue chain is Phosphoglucosamine mutase (445 aa).

The active-site Phosphoserine intermediate is the Ser-99. Mg(2+)-binding residues include Ser-99, Asp-242, Asp-244, and Asp-246. Position 99 is a phosphoserine (Ser-99).

This sequence belongs to the phosphohexose mutase family. It depends on Mg(2+) as a cofactor. Activated by phosphorylation.

It catalyses the reaction alpha-D-glucosamine 1-phosphate = D-glucosamine 6-phosphate. Functionally, catalyzes the conversion of glucosamine-6-phosphate to glucosamine-1-phosphate. This chain is Phosphoglucosamine mutase, found in Campylobacter jejuni subsp. jejuni serotype O:23/36 (strain 81-176).